The sequence spans 331 residues: Vitamin B12 import system permease protein BtuC (331 aa).

Transmembrane regions (helical) follow at residues 20-42, 62-84, 91-113, 117-136, 148-170, 190-209, 240-262, 277-296, and 303-325; these read VMLA…FLSP, LVAA…VLLG, GVLG…LPVM, TVFM…ILVG, MLLV…FYFS, SWHH…WLCL, LAIS…VGLV, FLLP…SDIW, and SAEL…WMLI.

The protein belongs to the binding-protein-dependent transport system permease family. FecCD subfamily. In terms of assembly, the complex is composed of two ATP-binding proteins (BtuD), two transmembrane proteins (BtuC) and a solute-binding protein (BtuF).

The protein resides in the cell inner membrane. In terms of biological role, part of the ABC transporter complex BtuCDF involved in vitamin B12 import. Involved in the translocation of the substrate across the membrane. This is Vitamin B12 import system permease protein BtuC from Vibrio vulnificus (strain CMCP6).